The chain runs to 190 residues: Small ribosomal subunit protein uS5 (190 aa).

The region spanning Phe22 to Val85 is the S5 DRBM domain.

Belongs to the universal ribosomal protein uS5 family. In terms of assembly, part of the 30S ribosomal subunit. Contacts proteins S4 and S8.

Functionally, with S4 and S12 plays an important role in translational accuracy. Its function is as follows. Located at the back of the 30S subunit body where it stabilizes the conformation of the head with respect to the body. In Rhodopseudomonas palustris (strain BisB18), this protein is Small ribosomal subunit protein uS5.